A 146-amino-acid chain; its full sequence is 3-hydroxyacyl-[acyl-carrier-protein] dehydratase FabZ (146 aa).

His48 is a catalytic residue.

This sequence belongs to the thioester dehydratase family. FabZ subfamily.

Its subcellular location is the cytoplasm. It carries out the reaction a (3R)-hydroxyacyl-[ACP] = a (2E)-enoyl-[ACP] + H2O. Its function is as follows. Involved in unsaturated fatty acids biosynthesis. Catalyzes the dehydration of short chain beta-hydroxyacyl-ACPs and long chain saturated and unsaturated beta-hydroxyacyl-ACPs. The polypeptide is 3-hydroxyacyl-[acyl-carrier-protein] dehydratase FabZ (Campylobacter jejuni subsp. jejuni serotype O:6 (strain 81116 / NCTC 11828)).